The chain runs to 133 residues: MPVEYLVDASALYALAAHYDKWIKHREKLAILHLTIYEAGNALWKEARLGRVDWAAASRHLKKVLSSFKVLEDPPLDEVLRVAVERGLTFYDASYAYVAESSGLVLVTQDRELLAKTKGAIDVETLLVRLAAQ.

The PINc domain maps to 5 to 113 (YLVDASALYA…LVLVTQDREL (109 aa)). Mg(2+) is bound by residues Asp8, Asp92, and Asp110.

Belongs to the PINc/VapC protein family. Homodimer, 2 of which then form a homotetramer. The cofactor is Mg(2+).

Its activity is regulated as follows. Inhibited by EDTA. In terms of biological role, toxic component of a type II toxin-antitoxin (TA) system. Has ribonuclease activity. Has a slow ssDNA exonuclease activity. This Pyrobaculum aerophilum (strain ATCC 51768 / DSM 7523 / JCM 9630 / CIP 104966 / NBRC 100827 / IM2) protein is Exonuclease VapC9.